A 233-amino-acid chain; its full sequence is Small ribosomal subunit protein uS2 (233 aa).

It belongs to the universal ribosomal protein uS2 family.

The sequence is that of Small ribosomal subunit protein uS2 from Bacillus cytotoxicus (strain DSM 22905 / CIP 110041 / 391-98 / NVH 391-98).